A 172-amino-acid chain; its full sequence is MSSSQNNNSSWIDWFLGIKGNQFLCRVPTDYVQDTFNQMGLEYFSEILDVILKPVIDSSSGLLYGDEKKWYGMIHARYIRAERGLIAMHRKYMRGDFGSCPNISCDRQNTLPVGLSAVWGKSTVKIHCPRCKSNFHPKSDTQLDGAMFGPSFPDIFFSLLPNLTSPLDDPRT.

Belongs to the casein kinase 2 subunit beta family. Interacts in vitro with the casein kinase 2 alpha subunit (CkII-alpha). The relevance of such interaction is however unclear in vivo. Probably not expressed in wild-type flies. In males lacking the Y chromosome, it is testis-specific and constitutes the main component of star-shaped crystals.

Its function is as follows. Unknown. In males lacking the Y chromosome, its strong overexpression leads to the appearance of proteinaceous star-shaped crystals in the primary spermatocytes causing meiotic drive, possibly by interfering with normal casein kinase 2 activity. This chain is Stellate protein CG33247 (Ste:CG33247), found in Drosophila melanogaster (Fruit fly).